Here is a 466-residue protein sequence, read N- to C-terminus: ATP synthase subunit beta (466 aa).

G155 to T162 lines the ATP pocket.

This sequence belongs to the ATPase alpha/beta chains family. As to quaternary structure, F-type ATPases have 2 components, CF(1) - the catalytic core - and CF(0) - the membrane proton channel. CF(1) has five subunits: alpha(3), beta(3), gamma(1), delta(1), epsilon(1). CF(0) has three main subunits: a(1), b(2) and c(9-12). The alpha and beta chains form an alternating ring which encloses part of the gamma chain. CF(1) is attached to CF(0) by a central stalk formed by the gamma and epsilon chains, while a peripheral stalk is formed by the delta and b chains.

It is found in the cell inner membrane. It carries out the reaction ATP + H2O + 4 H(+)(in) = ADP + phosphate + 5 H(+)(out). Its function is as follows. Produces ATP from ADP in the presence of a proton gradient across the membrane. The catalytic sites are hosted primarily by the beta subunits. The protein is ATP synthase subunit beta of Bordetella pertussis (strain Tohama I / ATCC BAA-589 / NCTC 13251).